We begin with the raw amino-acid sequence, 388 residues long: S-adenosylmethionine synthase (388 aa).

H14 provides a ligand contact to ATP. Residue D16 coordinates Mg(2+). A K(+)-binding site is contributed by E42. Residues E55 and Q98 each contribute to the L-methionine site. The interval 98 to 108 (QSAEISSAVDQ) is flexible loop. Residues 166-168 (DGK), D242, 248-249 (RK), A265, and K269 each bind ATP. D242 is an L-methionine binding site. K273 is a binding site for L-methionine.

This sequence belongs to the AdoMet synthase family. As to quaternary structure, homotetramer; dimer of dimers. Mg(2+) is required as a cofactor. K(+) serves as cofactor.

It is found in the cytoplasm. It catalyses the reaction L-methionine + ATP + H2O = S-adenosyl-L-methionine + phosphate + diphosphate. It participates in amino-acid biosynthesis; S-adenosyl-L-methionine biosynthesis; S-adenosyl-L-methionine from L-methionine: step 1/1. Its function is as follows. Catalyzes the formation of S-adenosylmethionine (AdoMet) from methionine and ATP. The overall synthetic reaction is composed of two sequential steps, AdoMet formation and the subsequent tripolyphosphate hydrolysis which occurs prior to release of AdoMet from the enzyme. The protein is S-adenosylmethionine synthase of Oenococcus oeni (strain ATCC BAA-331 / PSU-1).